A 567-amino-acid polypeptide reads, in one-letter code: Formate--tetrahydrofolate ligase (567 aa).

76–83 (TPAGEGKT) is an ATP binding site.

Belongs to the formate--tetrahydrofolate ligase family.

The catalysed reaction is (6S)-5,6,7,8-tetrahydrofolate + formate + ATP = (6R)-10-formyltetrahydrofolate + ADP + phosphate. It functions in the pathway one-carbon metabolism; tetrahydrofolate interconversion. This is Formate--tetrahydrofolate ligase from Sinorhizobium medicae (strain WSM419) (Ensifer medicae).